We begin with the raw amino-acid sequence, 451 residues long: uncharacterized protein (451 aa).

The TRAM domain maps to 1–59 (MLHKNDIIETEISDISHEGMGIAKVDGFVFFVENALPGEIIKMRVLKLRKRIGYGKVEE). S-adenosyl-L-methionine is bound by residues Gln283, Tyr312, Glu333, and Asp381. Cys408 serves as the catalytic Nucleophile.

This sequence belongs to the class I-like SAM-binding methyltransferase superfamily. RNA M5U methyltransferase family.

This is an uncharacterized protein from Streptococcus agalactiae serotype V (strain ATCC BAA-611 / 2603 V/R).